A 413-amino-acid chain; its full sequence is Coiled-coil domain-containing protein 83 (413 aa).

The tract at residues 1 to 21 (MENSGKANKKDTHDGPPKEIK) is disordered. Residues 8 to 21 (NKKDTHDGPPKEIK) are compositionally biased toward basic and acidic residues. Coiled coils occupy residues 37-184 (EDAV…RKKI) and 216-256 (WEND…LSNC).

In Homo sapiens (Human), this protein is Coiled-coil domain-containing protein 83 (CCDC83).